A 198-amino-acid chain; its full sequence is Large ribosomal subunit protein bL25 (198 aa).

The protein belongs to the bacterial ribosomal protein bL25 family. CTC subfamily. In terms of assembly, part of the 50S ribosomal subunit; part of the 5S rRNA/L5/L18/L25 subcomplex. Contacts the 5S rRNA. Binds to the 5S rRNA independently of L5 and L18.

In terms of biological role, this is one of the proteins that binds to the 5S RNA in the ribosome where it forms part of the central protuberance. This is Large ribosomal subunit protein bL25 from Streptomyces coelicolor (strain ATCC BAA-471 / A3(2) / M145).